Consider the following 604-residue polypeptide: Sulfite reductase [NADPH] flavoprotein alpha-component (604 aa).

A Flavodoxin-like domain is found at valine 65 to leucine 203. FMN is bound by residues serine 71–glycine 76, serine 118–glycine 121, and leucine 154–cysteine 163. One can recognise an FAD-binding FR-type domain in the interval glutamine 236–proline 453. FAD-binding positions include threonine 324, leucine 358, arginine 392–serine 395, threonine 410–alanine 412, and glycine 425–serine 428. NADP(+) is bound by residues serine 524–arginine 525, lysine 530–glutamine 534, and aspartate 566. Tyrosine 604 serves as a coordination point for FAD.

Belongs to the NADPH-dependent sulphite reductase flavoprotein subunit CysJ family. This sequence in the N-terminal section; belongs to the flavodoxin family. The protein in the C-terminal section; belongs to the flavoprotein pyridine nucleotide cytochrome reductase family. In terms of assembly, alpha(8)-beta(8). The alpha component is a flavoprotein, the beta component is a hemoprotein. The cofactor is FAD. It depends on FMN as a cofactor.

The catalysed reaction is hydrogen sulfide + 3 NADP(+) + 3 H2O = sulfite + 3 NADPH + 4 H(+). Its pathway is sulfur metabolism; hydrogen sulfide biosynthesis; hydrogen sulfide from sulfite (NADPH route): step 1/1. Functionally, component of the sulfite reductase complex that catalyzes the 6-electron reduction of sulfite to sulfide. This is one of several activities required for the biosynthesis of L-cysteine from sulfate. The flavoprotein component catalyzes the electron flow from NADPH -&gt; FAD -&gt; FMN to the hemoprotein component. The chain is Sulfite reductase [NADPH] flavoprotein alpha-component from Shewanella sp. (strain MR-4).